A 470-amino-acid polypeptide reads, in one-letter code: Nuclear receptor subfamily 0 group B member 1 (470 aa).

Tandem repeats lie at residues 1-67 (MAGE…YRCC), 68-133 (FCGK…YRCC), and 134-200 (FCGE…YRCC). Residues 1–253 (MAGENHQWQG…RPVALKSPQV (253 aa)) form a 4 X 67 AA tandem repeats region. Short sequence motifs (LXXLL motif) lie at residues 13–17 (LYNML), 80–84 (LYSML), and 146–150 (LYSLL). A 4; truncated repeat occupies 201-253 (FCGEDHPQQGSTLYCMPTSTNQAQAAPEERPRAPWWDTSSGALRPVALKSPQV). Residues 205 to 469 (DHPQQGSTLY…DMMLEMLCTK (265 aa)) enclose the NR LBD domain. Residues 461–466 (MMLEML) carry the AF-2 motif motif.

The protein belongs to the nuclear hormone receptor family. NR0 subfamily. Homodimer. Interacts with NR5A1, NR5A2, NR0B2 and with COPS2. Interacts with ESRRB; represses ESRRB activity at the GATA6 promoter.

The protein resides in the nucleus. It is found in the cytoplasm. Its function is as follows. Nuclear receptor that lacks a DNA-binding domain and acts as a corepressor that inhibits the transcriptional activity of other nuclear receptors through heterodimeric interactions. Component of a cascade required for the development of the hypothalamic-pituitary-adrenal-gonadal axis. May also have a role in the development of the embryo and in the maintenance of embryonic stem cell pluripotency. In Pan troglodytes (Chimpanzee), this protein is Nuclear receptor subfamily 0 group B member 1 (NR0B1).